A 504-amino-acid polypeptide reads, in one-letter code: Maturase K (504 aa).

It belongs to the intron maturase 2 family. MatK subfamily.

It localises to the plastid. It is found in the chloroplast. Its function is as follows. Usually encoded in the trnK tRNA gene intron. Probably assists in splicing its own and other chloroplast group II introns. This is Maturase K from Lepidium campestre (Field pepperwort).